The chain runs to 647 residues: Dihydrolipoyllysine-residue acetyltransferase component of pyruvate dehydrogenase complex (647 aa).

The transit peptide at 1–86 directs the protein to the mitochondrion; that stretch reads MWRVCARRAQ…LWGSPSRRWY (86 aa). The region spanning 91-167 is the Lipoyl-binding 1 domain; the sequence is HQKVPLPSLS…PVGAIICITV (77 aa). S100 bears the Phosphoserine mark. K132 is subject to N6-lipoyllysine. Residues 184 to 216 are disordered; the sequence is SAAPAPPAAPAPTPAAPAPSPTPSAQAPGSSYP. Pro residues predominate over residues 187 to 205; the sequence is PAPPAAPAPTPAAPAPSPT. Residues 218 to 294 form the Lipoyl-binding 2 domain; it reads HMQVLLPALS…PLGTPLCIIV (77 aa). K259 is modified (N6-lipoyllysine). Positions 311 to 352 are disordered; that stretch reads VTDLKPPAPPPIPSPAAPVPPAPQPVAPPPSAPRPAAPAGPK. Residues 316–348 show a composition bias toward pro residues; the sequence is PPAPPPIPSPAAPVPPAPQPVAPPPSAPRPAAP. The Peripheral subunit-binding (PSBD) domain occupies 356 to 393; the sequence is FVSPLAKKLAAEKGIDLTQVKGTGPDGRIIKKDIDSFV. R461 serves as a coordination point for CoA. The residue at position 466 (K466) is an N6-acetyllysine. Residue K473 is modified to N6-succinyllysine. Position 475 (S475) interacts with CoA. The residue at position 547 (K547) is an N6-succinyllysine. S566, N567, and G591 together coordinate CoA. Active-site residues include H620 and D624.

The protein belongs to the 2-oxoacid dehydrogenase family. Part of the pyruvate dehydrogenase complex (PDHc) that is a multi-enzyme complex composed of multiple copies of three enzymes, pyruvate dehydrogenase (subunits PDH1A and PDHB, E1 component), dihydrolipoamide acetyltransferase (DLAT, E2 component), and dihydrolipoamide dehydrogenase (DLD, E3 component) to which is added an additional protein the E3-binding protein (PDHX, E3BP). In terms of structural architecture, the E2 and E3BP components assemble into a 60meric central core with icosahedral symmetry. The central core is decorated with E1 and E3 proteins. Currently, two alternative models for the E2:E3BP stoichiometry are considered as being either 48:12 (E2(48)-E3BP(12)) or 40:20 (E2(40)-E3BP(20)). Interacts with PDK2 and PDK3. Interacts with SIRT4. Interacts with PDHB. (R)-lipoate serves as cofactor. In terms of processing, delipoylated at Lys-132 and Lys-259 by SIRT4, delipoylation decreases the PHD complex activity.

It localises to the mitochondrion matrix. The catalysed reaction is N(6)-[(R)-dihydrolipoyl]-L-lysyl-[protein] + acetyl-CoA = N(6)-[(R)-S(8)-acetyldihydrolipoyl]-L-lysyl-[protein] + CoA. In terms of biological role, as part of the pyruvate dehydrogenase complex, catalyzes the transfers of an acetyl group to a lipoic acid moiety. The pyruvate dehydrogenase complex, catalyzes the overall conversion of pyruvate to acetyl-CoA and CO(2), and thereby links cytoplasmic glycolysis and the mitochondrial tricarboxylic acid (TCA) cycle. The protein is Dihydrolipoyllysine-residue acetyltransferase component of pyruvate dehydrogenase complex of Bos taurus (Bovine).